The sequence spans 379 residues: Heterogeneous nuclear ribonucleoprotein A3 (379 aa).

N-acetylmethionine is present on Met-1. The span at 1 to 10 shows a compositional bias: pro residues; the sequence is MEVKPPPGRP. The disordered stretch occupies residues 1–34; the sequence is MEVKPPPGRPQPDSGRRRRRRGEEGHDPKEPEQL. Lys-4 participates in a covalent cross-link: Glycyl lysine isopeptide (Lys-Gly) (interchain with G-Cter in SUMO2). The residue at position 14 (Ser-14) is a Phosphoserine. A compositionally biased stretch (basic and acidic residues) spans 21 to 34; the sequence is RGEEGHDPKEPEQL. The region spanning 35 to 118 is the RRM 1 domain; the sequence is RKLFIGGLSF…RAVSREDSVK (84 aa). Residue Lys-36 forms a Glycyl lysine isopeptide (Lys-Gly) (interchain with G-Cter in SUMO2) linkage. Position 43 is a phosphoserine (Ser-43). Dimethylated arginine; alternate is present on Arg-52. Arg-52 is modified (omega-N-methylarginine; alternate). Arg-76 carries the omega-N-methylarginine modification. Residues Ser-112 and Ser-116 each carry the phosphoserine modification. Lys-118 participates in a covalent cross-link: Glycyl lysine isopeptide (Lys-Gly) (interchain with G-Cter in SUMO2). Thr-124 carries the post-translational modification Phosphothreonine. The region spanning 126–205 is the RRM 2 domain; sequence KKIFVGGIKE…CEVKKALSKQ (80 aa). N6-acetyllysine; alternate is present on Lys-134. Residue Lys-134 forms a Glycyl lysine isopeptide (Lys-Gly) (interchain with G-Cter in SUMO2); alternate linkage. Glycyl lysine isopeptide (Lys-Gly) (interchain with G-Cter in SUMO2) cross-links involve residues Lys-151 and Lys-182. Residues 204–225 are disordered; that stretch reads KQEMQSAGSQRGRGGGSGNFMG. Arg-214, Arg-216, Arg-226, Arg-239, and Arg-246 each carry omega-N-methylarginine; alternate. Residues Arg-214, Arg-216, Arg-226, Arg-239, and Arg-246 each carry the asymmetric dimethylarginine; alternate modification. The span at 214-225 shows a compositional bias: gly residues; the sequence is RGRGGGSGNFMG. Arg-257 carries the post-translational modification Omega-N-methylarginine. Arg-286 bears the Asymmetric dimethylarginine mark. Positions 335-379 are disordered; that stretch reads NYSGQQQSNYGPMKGGSFGGRSSGSPYGGGYGSGGGSGGYGSRRF. The span at 347 to 379 shows a compositional bias: gly residues; it reads MKGGSFGGRSSGSPYGGGYGSGGGSGGYGSRRF. Position 351 is a phosphoserine (Ser-351). Omega-N-methylarginine is present on Arg-355. A Phosphoserine modification is found at Ser-359. A phosphotyrosine mark is found at Tyr-361 and Tyr-365. A phosphoserine mark is found at Ser-367 and Ser-371. Phosphotyrosine is present on Tyr-374. Ser-376 bears the Phosphoserine mark.

In terms of assembly, identified in the spliceosome C complex.

The protein localises to the nucleus. In terms of biological role, plays a role in cytoplasmic trafficking of RNA. Binds to the cis-acting response element, A2RE. May be involved in pre-mRNA splicing. The polypeptide is Heterogeneous nuclear ribonucleoprotein A3 (Hnrnpa3) (Mus musculus (Mouse)).